The chain runs to 242 residues: Small ribosomal subunit protein uS2 (242 aa).

This sequence belongs to the universal ribosomal protein uS2 family.

This chain is Small ribosomal subunit protein uS2, found in Shewanella putrefaciens (strain CN-32 / ATCC BAA-453).